The primary structure comprises 172 residues: Small ribosomal subunit protein uS5 (172 aa).

In terms of domain architecture, S5 DRBM spans 15–78 (LNDKLIFINR…ANAKRNLSRI (64 aa)).

Belongs to the universal ribosomal protein uS5 family. Part of the 30S ribosomal subunit. Contacts proteins S4 and S8.

In terms of biological role, with S4 and S12 plays an important role in translational accuracy. Located at the back of the 30S subunit body where it stabilizes the conformation of the head with respect to the body. In Dehalococcoides mccartyi (strain ATCC BAA-2266 / KCTC 15142 / 195) (Dehalococcoides ethenogenes (strain 195)), this protein is Small ribosomal subunit protein uS5.